We begin with the raw amino-acid sequence, 449 residues long: UDP-glycosyltransferase 76E7 (449 aa).

UDP-alpha-D-glucose-binding positions include Ser-275, 333–335, 350–358, and 372–375; these read APQ, HCGWNSTLE, and TTDQ.

This sequence belongs to the UDP-glycosyltransferase family.

The chain is UDP-glycosyltransferase 76E7 (UGT76E7) from Arabidopsis thaliana (Mouse-ear cress).